A 308-amino-acid polypeptide reads, in one-letter code: Probable very-long-chain enoyl-CoA reductase art-1 (308 aa).

The Ubiquitin-like domain maps to 7–85 (VYDAKRTDNL…VLYVRDLGPQ (79 aa)). The next 4 membrane-spanning stretches (helical) occupy residues 112 to 132 (FIYG…IAFF), 169 to 189 (WGFA…PPAF), 194 to 214 (VYFG…IHIL), and 255 to 275 (WIFF…TAGF).

Belongs to the steroid 5-alpha reductase family.

Its subcellular location is the endoplasmic reticulum membrane. The enzyme catalyses a very-long-chain 2,3-saturated fatty acyl-CoA + NADP(+) = a very-long-chain (2E)-enoyl-CoA + NADPH + H(+). It participates in lipid metabolism; fatty acid biosynthesis. Catalyzes the last of the four reactions of the long-chain fatty acids elongation cycle. This endoplasmic reticulum-bound enzymatic process, allows the addition of 2 carbons to the chain of long- and very long-chain fatty acids/VLCFAs per cycle. This enzyme reduces the trans-2,3-enoyl-CoA fatty acid intermediate to an acyl-CoA that can be further elongated by entering a new cycle of elongation. Thereby, it participates in the production of VLCFAs of different chain lengths that are involved in multiple biological processes as precursors of membrane lipids and lipid mediators. The polypeptide is Probable very-long-chain enoyl-CoA reductase art-1 (art-1) (Caenorhabditis elegans).